The following is a 582-amino-acid chain: Cryptochrome-2 (582 aa).

The region spanning 12-141 (CRSVHWFRRG…EVVIENSHTL (130 aa)) is the Photolyase/cryptochrome alpha/beta domain. FAD-binding positions include S261, Q298, H364, and 396 to 398 (DAD). A disordered region spans residues 521 to 559 (GPVTDSAPGQGSSTSTAVRLPQSDQASPKRKHEGAEELC). Polar residues predominate over residues 527-546 (APGQGSSTSTAVRLPQSDQA).

The protein belongs to the DNA photolyase class-1 family. In terms of assembly, component of the circadian core oscillator, which includes the CRY proteins, CLOCK or NPAS2, BMAL1 or BMAL2, CSNK1E, and the PER proteins. FAD serves as cofactor. (6R)-5,10-methylene-5,6,7,8-tetrahydrofolate is required as a cofactor. In terms of tissue distribution, expressed in the pineal gland.

The protein resides in the cytoplasm. It localises to the nucleus. In terms of biological role, transcriptional repressor which forms a core component of the circadian clock. The circadian clock, an internal time-keeping system, regulates various physiological processes through the generation of approximately 24 hour circadian rhythms in gene expression, which are translated into rhythms in metabolism and behavior. It is derived from the Latin roots 'circa' (about) and 'diem' (day) and acts as an important regulator of a wide array of physiological functions including metabolism, sleep, body temperature, blood pressure, endocrine, immune, cardiovascular, and renal function. Consists of two major components: the central clock, residing in the suprachiasmatic nucleus (SCN) of the brain, and the peripheral clocks that are present in nearly every tissue and organ system. Both the central and peripheral clocks can be reset by environmental cues, also known as Zeitgebers (German for 'timegivers'). The predominant Zeitgeber for the central clock is light, which is sensed by retina and signals directly to the SCN. The central clock entrains the peripheral clocks through neuronal and hormonal signals, body temperature and feeding-related cues, aligning all clocks with the external light/dark cycle. Circadian rhythms allow an organism to achieve temporal homeostasis with its environment at the molecular level by regulating gene expression to create a peak of protein expression once every 24 hours to control when a particular physiological process is most active with respect to the solar day. Transcription and translation of core clock components (CLOCK, NPAS2, BMAL1, BMAL2, PER1, PER2, PER3, CRY1 and CRY2) plays a critical role in rhythm generation, whereas delays imposed by post-translational modifications (PTMs) are important for determining the period (tau) of the rhythms (tau refers to the period of a rhythm and is the length, in time, of one complete cycle). A diurnal rhythm is synchronized with the day/night cycle, while the ultradian and infradian rhythms have a period shorter and longer than 24 hours, respectively. Disruptions in the circadian rhythms contribute to the pathology of cardiovascular diseases, cancer, metabolic syndromes and aging. A transcription/translation feedback loop (TTFL) forms the core of the molecular circadian clock mechanism. Transcription factors, CLOCK or NPAS2 and BMAL1 or BMAL2, form the positive limb of the feedback loop, act in the form of a heterodimer and activate the transcription of core clock genes and clock-controlled genes (involved in key metabolic processes), harboring E-box elements (5'-CACGTG-3') within their promoters. The core clock genes: PER1/2/3 and CRY1/2 which are transcriptional repressors form the negative limb of the feedback loop and interact with the CLOCK|NPAS2-BMAL1|BMAL2 heterodimer inhibiting its activity and thereby negatively regulating their own expression. This heterodimer also activates nuclear receptors NR1D1/2, RORA/B/G, which form a second feedback loop and which activate and repress BMAL1 transcription, respectively. CRY1 and CRY2 have redundant functions but also differential and selective contributions at least in defining the pace of the SCN circadian clock and its circadian transcriptional outputs. Less potent transcriptional repressor in cerebellum and liver than CRY1, though less effective in lengthening the period of the SCN oscillator. Seems to play a critical role in tuning SCN circadian period by opposing the action of CRY1. With CRY1, dispensable for circadian rhythm generation but necessary for the development of intercellular networks for rhythm synchrony. Represses CLOCK-BMAL1-mediated transcriptional activation. The protein is Cryptochrome-2 (CRY2) of Gallus gallus (Chicken).